A 477-amino-acid polypeptide reads, in one-letter code: MKVTLPEFERAGVMVVGDVMLDRYWYGPTSRISPEAPVPVVKVNTIEERPGGAANVAMNITSLGANARLVGLTGIDDAARALSKSLADVNVKCDFVSVPTHPTITKLRVLSRNQQLIRLDFEEGFEGVDPQPLHERINQALSSIGALVLSDYAKGALASVQQMIQLARKAGVPVLIDPKGTDFERYRGATLLTPNLSEFEAVVGKCKTEEEIVERGMKLIADYELSALLVTRSEQGMSLLQPGKAPLHMPTQAQEVYDVTGAGDTVIGVLAATLAAGNSLEEACFFANAAAGVVVGKLGTSTVSPIELENAVRGRAETGFGVMTEEELKLAVAAARKRGEKVVMTNGVFDILHAGHVSYLANARKLGDRLIVAVNSDASTKRLKGDSRPVNPLEQRMIVLGALEAVDWVVSFEEDTPQRLIAGILPDLLVKGGDYKPEEIAGSKEVWANGGEVLVLNFEDGCSTTNIIKKIQQDKKG.

The tract at residues 1 to 318 (MKVTLPEFER…ENAVRGRAET (318 aa)) is ribokinase. Residue lysine 179 is modified to N6-acetyllysine. 195–198 (NLSE) contacts ATP. Residue aspartate 264 is part of the active site. Residues 344 to 477 (MTNGVFDILH…IKKIQQDKKG (134 aa)) are cytidylyltransferase.

This sequence in the N-terminal section; belongs to the carbohydrate kinase PfkB family. It in the C-terminal section; belongs to the cytidylyltransferase family. In terms of assembly, homodimer.

It catalyses the reaction D-glycero-beta-D-manno-heptose 7-phosphate + ATP = D-glycero-beta-D-manno-heptose 1,7-bisphosphate + ADP + H(+). The catalysed reaction is D-glycero-beta-D-manno-heptose 1-phosphate + ATP + H(+) = ADP-D-glycero-beta-D-manno-heptose + diphosphate. Its pathway is nucleotide-sugar biosynthesis; ADP-L-glycero-beta-D-manno-heptose biosynthesis; ADP-L-glycero-beta-D-manno-heptose from D-glycero-beta-D-manno-heptose 7-phosphate: step 1/4. It participates in nucleotide-sugar biosynthesis; ADP-L-glycero-beta-D-manno-heptose biosynthesis; ADP-L-glycero-beta-D-manno-heptose from D-glycero-beta-D-manno-heptose 7-phosphate: step 3/4. Catalyzes the phosphorylation of D-glycero-D-manno-heptose 7-phosphate at the C-1 position to selectively form D-glycero-beta-D-manno-heptose-1,7-bisphosphate. Its function is as follows. Catalyzes the ADP transfer from ATP to D-glycero-beta-D-manno-heptose 1-phosphate, yielding ADP-D-glycero-beta-D-manno-heptose. The chain is Bifunctional protein HldE from Shigella dysenteriae serotype 1 (strain Sd197).